We begin with the raw amino-acid sequence, 675 residues long: Protein PALS1 (675 aa).

The segment at 1–345 (MTTSYMNGHV…QQIKPPPAKE (345 aa)) is required for the correct localization of PALS1 and PATJ at cell-cell contacts and the normal formation of tight junctions and adherens junctions. Phosphoserine occurs at positions 14 and 25. The segment at 21 to 140 (LDLASPEEYP…LKHIQHTLVD (120 aa)) is interaction with PARD6B. The disordered stretch occupies residues 51–79 (RRSAQLERIRQQQEDMRRRREEEGKKQEL). Positions 54–79 (AQLERIRQQQEDMRRRREEEGKKQEL) are enriched in basic and acidic residues. Phosphoserine is present on residues serine 83 and serine 84. L27 domains lie at 120 to 177 (NILD…SKAS) and 179 to 235 (PFPL…MQLE). Positions 181-243 (PLIANVQDLV…LEPITDERVY (63 aa)) are interaction with LIN7C. Residues 256–336 (IVRIEKARDI…TLTFVLIPSQ (81 aa)) form the PDZ domain. The region spanning 345–417 (ETVIHVKAHF…PGKSFQQQRE (73 aa)) is the SH3 domain. The 182-residue stretch at 479–660 (KRPIILIGPQ…AYQELLRLIN (182 aa)) folds into the Guanylate kinase-like domain. 486-493 (GPQNCGQN) is a binding site for ATP.

It belongs to the MAGUK family. Heterodimer with MPP1. Forms a heterotrimeric complex composed of PALS1, LIN7B and PATJ; the N-terminal L27 domain of PALS1 interacts with the L27 domain of PATJ and the C-terminal L27 domain of PALS1 interacts with the L27 domain of LIN7B. Component of a complex composed of PALS1, CRB1 and MPP4. Component of a complex whose core is composed of ARHGAP17, AMOT, PALS1, PATJ and PARD3/PAR3. Component of a complex composed of PALS1, CRB1 and EPB41L5. Within the complex, interacts (via HOOK domain) with EPB41L5 (via FERM domain), and interacts with CRB1 (via intracellular domain). Component of a complex composed of PALS1, MPP3 and CRB1; PALS1 acts as a bridging protein between MPP3 (via guanylate kinase-like domain) and CRB1. Component of a complex composed of CRB3, PALS1 and PATJ. As part of the Crumbs complex; interacts with WWP1, the interaction is enhanced by AMOTL2 and facilitates WWP1 localization to the plasma membrane. The Crumbs complex promotes monoubiquitination of AMOTL2 by WWP1, which activates the Hippo signaling pathway. Interacts (via PDZ domain) with PATJ (via N-terminus). Interacts with EZR. Interacts (via PDZ domain) with CRB1 (via C-terminal ERLI motif). While the PDZ domain is sufficient for interaction with CRB1, the adjacent SH3 and guanylate kinase-like domains are likely to contribute to a high affinity interaction. Interacts with WWTR1/TAZ (via WW domain). Interacts with MPP7. Interacts (via PDZ domain) with CRB3 (via C-terminus). Interacts with LIN7C. Interacts with MPDZ. Interacts with PARD6B. Interacts with SC6A1. Interacts with CDH5; the interaction promotes PALS1 localization to cell junctions and is required for CDH5-mediated vascular lumen formation and endothelial cell. Interacts with NPHP1 (via coiled coil and SH3 domains). Interacts with NPHP4. Interacts with CRB2. In terms of tissue distribution, expressed in the retinal pigment epithelium (at protein level). Expressed in the vascular plexus of the retina (at protein level). In the brain, expressed in the dentate gyrus of hippocampus, striatum and cerebellum (at protein level). Expressed in the sciatic nerve (at protein level). Expressed in the kidney nephron (at protein level). Expressed in the lung, and heart. Expressed in placenta, brain, skeletal muscles, pancreas and liver.

It localises to the golgi apparatus. The protein resides in the cell membrane. Its subcellular location is the endomembrane system. The protein localises to the cell junction. It is found in the tight junction. It localises to the adherens junction. The protein resides in the cell projection. Its subcellular location is the axon. The protein localises to the perikaryon. It is found in the apical cell membrane. Its function is as follows. Plays a role in tight junction biogenesis and in the establishment of cell polarity in epithelial cells. Also involved in adherens junction biogenesis by ensuring correct localization of the exocyst complex protein EXOC4/SEC8 which allows trafficking of adherens junction structural component CDH1 to the cell surface. Plays a role through its interaction with CDH5 in vascular lumen formation and endothelial membrane polarity. Required during embryonic and postnatal retinal development. Required for the maintenance of cerebellar progenitor cells in an undifferentiated proliferative state, preventing premature differentiation, and is required for cerebellar histogenesis, fissure formation, cerebellar layer organization and cortical development. Plays a role in neuronal progenitor cell survival, potentially via promotion of mTOR signaling. Plays a role in the radial and longitudinal extension of the myelin sheath in Schwann cells. May modulate SC6A1/GAT1-mediated GABA uptake by stabilizing the transporter. May play a role in the T-cell receptor-mediated activation of NF-kappa-B. Required for localization of EZR to the apical membrane of parietal cells and may play a role in the dynamic remodeling of the apical cytoskeleton. Required for the normal polarized localization of the vesicular marker STX4. Required for the correct trafficking of the myelin proteins PMP22 and MAG. Involved in promoting phosphorylation and cytoplasmic retention of transcriptional coactivators YAP1 and WWTR1/TAZ which leads to suppression of TGFB1-dependent transcription of target genes such as CCN2/CTGF, SERPINE1/PAI1, SNAI1/SNAIL1 and SMAD7. This chain is Protein PALS1, found in Mus musculus (Mouse).